Reading from the N-terminus, the 160-residue chain is Zinc finger A20 and AN1 domain-containing stress-associated protein 6 (160 aa).

The A20-type zinc-finger motif lies at 18–52; that stretch reads PEAPILCVNNCGFFGSRMTENMCSKCYRDTVKAKT. Residues Cys-24, Cys-28, Cys-40, and Cys-43 each contribute to the Zn(2+) site. Residues 73-94 form a disordered region; sequence EVTDGGSGSVADGKQVMEEDTP. The segment at 95–141 adopts an AN1-type zinc-finger fold; the sequence is KPPSNRCLSCRKKVGLTGFKCRCGGTFCSMHRYADSHKCTFDYKQVG. The Zn(2+) site is built by Cys-101, Cys-104, Cys-115, Cys-117, Cys-122, His-125, His-131, and Cys-133.

May be involved in environmental stress response. The protein is Zinc finger A20 and AN1 domain-containing stress-associated protein 6 (SAP6) of Oryza sativa subsp. japonica (Rice).